The primary structure comprises 806 residues: Exonuclease 1 (806 aa).

The segment at 1–99 is N-domain; it reads MGIQGLLQFI…KSRRERRQAN (99 aa). The Mg(2+) site is built by aspartate 30, aspartate 78, glutamate 150, aspartate 152, aspartate 171, aspartate 173, and aspartate 225. The I-domain stretch occupies residues 138–229; it reads RTRGVDCVVA…ILSGCDYLQS (92 aa). Disordered regions lie at residues 337–426, 443–475, and 512–754; these read RIDD…EDTS, HCPE…PFRP, and ETQE…SPGL. Residues 355–378 are compositionally biased toward polar residues; sequence RSSSWNDRCDKTATTQASIWSQNY. The segment covering 412 to 425 has biased composition (basic and acidic residues); sequence PQRESQVKRPREDT. Polar residues-rich tracts occupy residues 447–458, 533–542, and 578–589; these read TQPTTKPLTNDN, SQSGGDTSSL, and WSGTTKELNKSV. Positions 592-601 are enriched in basic and acidic residues; the sequence is PARDSTERQR. Polar residues predominate over residues 602 to 615; that stretch reads SSSTPSGLSTLQQF. Residues 651-670 show a composition bias toward low complexity; it reads SQDSAYFSQSSSISASVENS. The segment covering 676–685 has biased composition (basic and acidic residues); sequence NSDKEKERDS. Residues 686 to 696 are compositionally biased toward low complexity; it reads VVSNSPSSSPL. A compositionally biased stretch (polar residues) spans 744–754; the sequence is KNVNNENSPGL.

Belongs to the XPG/RAD2 endonuclease family. EXO1 subfamily. Requires Mg(2+) as cofactor.

Its subcellular location is the nucleus. Its function is as follows. 5'-&gt;3' double-stranded DNA exonuclease which may also contain a cryptic 3'-&gt;5' double-stranded DNA exonuclease activity. Also exhibits endonuclease activity against 5'-overhanging flap structures similar to those generated by displacement synthesis when DNA polymerase encounters the 5'-end of a downstream Okazaki fragment. Required for DNA mismatch repair (MMR). The chain is Exonuclease 1 (exo1) from Danio rerio (Zebrafish).